A 527-amino-acid polypeptide reads, in one-letter code: Peptide chain release factor 3 (527 aa).

The 269-residue stretch at Ala9–Leu277 folds into the tr-type G domain. Residues Ser18–Thr25, Asp86–His90, and Asn140–Asp143 each bind GTP.

This sequence belongs to the TRAFAC class translation factor GTPase superfamily. Classic translation factor GTPase family. PrfC subfamily.

The protein localises to the cytoplasm. Increases the formation of ribosomal termination complexes and stimulates activities of RF-1 and RF-2. It binds guanine nucleotides and has strong preference for UGA stop codons. It may interact directly with the ribosome. The stimulation of RF-1 and RF-2 is significantly reduced by GTP and GDP, but not by GMP. The polypeptide is Peptide chain release factor 3 (Pseudomonas savastanoi pv. phaseolicola (strain 1448A / Race 6) (Pseudomonas syringae pv. phaseolicola (strain 1448A / Race 6))).